Here is a 281-residue protein sequence, read N- to C-terminus: Pantothenate synthetase (281 aa).

29–36 contributes to the ATP binding site; sequence MGYLHEGH. His-36 (proton donor) is an active-site residue. Residue Gln-60 participates in (R)-pantoate binding. Residue Gln-60 coordinates beta-alanine. An ATP-binding site is contributed by 146–149; sequence GQKD. Gln-152 serves as a coordination point for (R)-pantoate. Residues Val-175 and 183 to 186 each bind ATP; that span reads MSSR.

The protein belongs to the pantothenate synthetase family. As to quaternary structure, homodimer.

It is found in the cytoplasm. It carries out the reaction (R)-pantoate + beta-alanine + ATP = (R)-pantothenate + AMP + diphosphate + H(+). It functions in the pathway cofactor biosynthesis; (R)-pantothenate biosynthesis; (R)-pantothenate from (R)-pantoate and beta-alanine: step 1/1. Catalyzes the condensation of pantoate with beta-alanine in an ATP-dependent reaction via a pantoyl-adenylate intermediate. This is Pantothenate synthetase from Pseudothermotoga lettingae (strain ATCC BAA-301 / DSM 14385 / NBRC 107922 / TMO) (Thermotoga lettingae).